The primary structure comprises 416 residues: Histidinol dehydrogenase (416 aa).

Tyrosine 117, glutamine 178, and asparagine 201 together coordinate NAD(+). Substrate contacts are provided by threonine 224, glutamine 246, and histidine 249. The Zn(2+) site is built by glutamine 246 and histidine 249. Active-site proton acceptor residues include glutamate 314 and histidine 315. 4 residues coordinate substrate: histidine 315, aspartate 348, glutamate 402, and histidine 407. Aspartate 348 provides a ligand contact to Zn(2+). Histidine 407 is a Zn(2+) binding site.

This sequence belongs to the histidinol dehydrogenase family. Requires Zn(2+) as cofactor.

The catalysed reaction is L-histidinol + 2 NAD(+) + H2O = L-histidine + 2 NADH + 3 H(+). It functions in the pathway amino-acid biosynthesis; L-histidine biosynthesis; L-histidine from 5-phospho-alpha-D-ribose 1-diphosphate: step 9/9. Catalyzes the sequential NAD-dependent oxidations of L-histidinol to L-histidinaldehyde and then to L-histidine. This chain is Histidinol dehydrogenase, found in Staphylococcus aureus (strain bovine RF122 / ET3-1).